We begin with the raw amino-acid sequence, 274 residues long: Diaminopimelate epimerase (274 aa).

3 residues coordinate substrate: asparagine 11, glutamine 44, and asparagine 64. The Proton donor role is filled by cysteine 73. Substrate-binding positions include 74–75 (GN), asparagine 157, asparagine 190, and 208–209 (ER). The Proton acceptor role is filled by cysteine 217. 218–219 (GS) provides a ligand contact to substrate.

The protein belongs to the diaminopimelate epimerase family. Homodimer.

The protein resides in the cytoplasm. The enzyme catalyses (2S,6S)-2,6-diaminopimelate = meso-2,6-diaminopimelate. Its pathway is amino-acid biosynthesis; L-lysine biosynthesis via DAP pathway; DL-2,6-diaminopimelate from LL-2,6-diaminopimelate: step 1/1. In terms of biological role, catalyzes the stereoinversion of LL-2,6-diaminopimelate (L,L-DAP) to meso-diaminopimelate (meso-DAP), a precursor of L-lysine and an essential component of the bacterial peptidoglycan. This Sodalis glossinidius (strain morsitans) protein is Diaminopimelate epimerase.